Consider the following 289-residue polypeptide: Phosphoribulokinase (289 aa).

12-20 serves as a coordination point for ATP; it reads GSSGAGTTT.

This sequence belongs to the phosphoribulokinase family.

It carries out the reaction D-ribulose 5-phosphate + ATP = D-ribulose 1,5-bisphosphate + ADP + H(+). Its pathway is carbohydrate biosynthesis; Calvin cycle. In Sinorhizobium medicae (strain WSM419) (Ensifer medicae), this protein is Phosphoribulokinase (cbbP).